Here is a 434-residue protein sequence, read N- to C-terminus: UDP-glucose 6-dehydrogenase (434 aa).

NAD(+) contacts are provided by residues 2-19 (NITFIGSGYVGLVSGIIM), valine 11, aspartate 30, lysine 35, threonine 121, and glutamate 152. Substrate is bound by residues 148–152 (EFLRE), lysine 204, asparagine 208, 249–253 (FLNAG), and glycine 257. Cysteine 260 (nucleophile) is an active-site residue. Residue lysine 263 participates in NAD(+) binding. A substrate-binding site is contributed by lysine 321. Residue arginine 328 participates in NAD(+) binding.

It belongs to the UDP-glucose/GDP-mannose dehydrogenase family.

It catalyses the reaction UDP-alpha-D-glucose + 2 NAD(+) + H2O = UDP-alpha-D-glucuronate + 2 NADH + 3 H(+). Its pathway is nucleotide-sugar biosynthesis; UDP-alpha-D-glucuronate biosynthesis; UDP-alpha-D-glucuronate from UDP-alpha-D-glucose: step 1/1. This chain is UDP-glucose 6-dehydrogenase (udg), found in Rickettsia typhi (strain ATCC VR-144 / Wilmington).